Here is a 216-residue protein sequence, read N- to C-terminus: Ras-like protein (216 aa).

16–23 contributes to the GTP binding site; the sequence is GGGGVGKS. Positions 38–46 match the Effector region motif; it reads YDPTIEDSY. Residues 63–67 and 122–125 contribute to the GTP site; these read DTAGQ and NKCD. 2 S-palmitoyl cysteine lipidation sites follow: cysteine 209 and cysteine 210. Cysteine 213 carries the cysteine methyl ester modification. A lipid anchor (S-geranylgeranyl cysteine) is attached at cysteine 213. A propeptide spans 214–216 (removed in mature form); it reads VVL.

Belongs to the small GTPase superfamily. Ras family.

Its subcellular location is the cell membrane. The enzyme catalyses GTP + H2O = GDP + phosphate + H(+). With respect to regulation, alternates between an inactive form bound to GDP and an active form bound to GTP. Activated by a guanine nucleotide-exchange factor (GEF) and inactivated by a GTPase-activating protein (GAP). The polypeptide is Ras-like protein (RAS1) (Cryptococcus neoformans var. neoformans serotype D (strain B-3501A) (Filobasidiella neoformans)).